Reading from the N-terminus, the 565-residue chain is Proline--tRNA ligase (565 aa).

The protein belongs to the class-II aminoacyl-tRNA synthetase family. ProS type 1 subfamily. As to quaternary structure, homodimer.

It is found in the cytoplasm. The enzyme catalyses tRNA(Pro) + L-proline + ATP = L-prolyl-tRNA(Pro) + AMP + diphosphate. Functionally, catalyzes the attachment of proline to tRNA(Pro) in a two-step reaction: proline is first activated by ATP to form Pro-AMP and then transferred to the acceptor end of tRNA(Pro). As ProRS can inadvertently accommodate and process non-cognate amino acids such as alanine and cysteine, to avoid such errors it has two additional distinct editing activities against alanine. One activity is designated as 'pretransfer' editing and involves the tRNA(Pro)-independent hydrolysis of activated Ala-AMP. The other activity is designated 'posttransfer' editing and involves deacylation of mischarged Ala-tRNA(Pro). The misacylated Cys-tRNA(Pro) is not edited by ProRS. This Lactobacillus delbrueckii subsp. bulgaricus (strain ATCC BAA-365 / Lb-18) protein is Proline--tRNA ligase.